We begin with the raw amino-acid sequence, 471 residues long: Ribulose bisphosphate carboxylase large chain 2 (471 aa).

The substrate site is built by Asn-116 and Thr-166. The active-site Proton acceptor is the Lys-168. A substrate-binding site is contributed by Lys-170. Lys-194, Asp-196, and Glu-197 together coordinate Mg(2+). At Lys-194 the chain carries N6-carboxylysine. His-287 (proton acceptor) is an active-site residue. Positions 288, 320, and 372 each coordinate substrate.

This sequence belongs to the RuBisCO large chain family. Type I subfamily. In terms of assembly, heterohexadecamer of 8 large chains and 8 small chains; disulfide-linked. The disulfide link is formed within the large subunit homodimers. Mg(2+) is required as a cofactor. In terms of processing, the disulfide bond which can form in the large chain dimeric partners within the hexadecamer appears to be associated with oxidative stress and protein turnover.

The enzyme catalyses 2 (2R)-3-phosphoglycerate + 2 H(+) = D-ribulose 1,5-bisphosphate + CO2 + H2O. It carries out the reaction D-ribulose 1,5-bisphosphate + O2 = 2-phosphoglycolate + (2R)-3-phosphoglycerate + 2 H(+). Its function is as follows. RuBisCO catalyzes two reactions: the carboxylation of D-ribulose 1,5-bisphosphate, the primary event in carbon dioxide fixation, as well as the oxidative fragmentation of the pentose substrate. Both reactions occur simultaneously and in competition at the same active site. The sequence is that of Ribulose bisphosphate carboxylase large chain 2 from Allochromatium vinosum (strain ATCC 17899 / DSM 180 / NBRC 103801 / NCIMB 10441 / D) (Chromatium vinosum).